The following is a 145-amino-acid chain: Toxin Res (145 aa).

This sequence belongs to the MbcT/ParT/Res family. As to quaternary structure, homodimer. Forms a complex with cognate antitoxin Xre; the 2 toxin molecules dimerize and each contacts an Xre homodimer. Most Res-Xre contacts are between the antitoxin molecule closest to the toxin.

Functionally, toxic component of a type II toxin-antitoxin (TA) system. Expression in E.coli inhibits cell growth. In vivo it is probably neutralized by cognate antitoxin Xre; this has not been shown upon expression in E.coli. Probably depletes intracellular NAD(+). The protein is Toxin Res of Pseudomonas putida (strain ATCC 47054 / DSM 6125 / CFBP 8728 / NCIMB 11950 / KT2440).